Here is an 852-residue protein sequence, read N- to C-terminus: MTKSLESVSFKDVTVDFSRDEWQQLDLAQKSLYREVMLENYFNLISVGCQVPKPEVIFSLEQEEPCMLDGEIPSQSRPDGDIGFGPLQQRMSEEVSFQSEININLFTRDDPYSILEELWKDDEHTRKCGENQNKPLSRVVFINKKTLANDSIFEYKDIGEIVHVNTHLVSSRKRPHNCNSCGKNLEPIITLYNRNNATENSDKTIGDGDIFTHLNSHTEVTACECNQCGKPLHHKQALIQQQKIHTRESLYLFSDYVNVFSPKSHAFAHESICAEEKQHECHECEAVFTQKSQLDGSQRVYAGICTEYEKDFSLKSNRQKTPYEGNYYKCSDYGRAFIQKSDLFRCQRIHSGEKPYEYSECEKNLPQNSNLNIHKKIHTGGKHFECTECGKAFTRKSTLSMHQKIHTGEKPYVCTECGKAFIRKSHFITHERIHTGEKPYECSDCGKSFIKKSQLHVHQRIHTGENPFICSECGKVFTHKTNLIIHQKIHTGERPYICTVCGKAFTDRSNLIKHQKIHTGEKPYKCSDCGKSFTWKSRLRIHQKCHTGERHYECSECGKAFIQKSTLSMHQRIHRGEKPYVCTECGKAFFHKSHFITHERIHTGEKPYECSICGKSFTKKSQLHVHQQIHTGEKPYRCAECGKAFTDRSNLFTHQKIHTGEKPYKCSDCGKAFTRKSGLHIHQQSHTGERHYECSECGKAFARKSTLIMHQRIHTGEKPYICNECGKSFIQKSHLNRHRRIHTGEKPYECSDCGKSFIKKSQLHEHHRIHTGEKPYICAECGKAFTIRSNLIKHQKIHTKQKPYKCSDLGKALNWKPQLSMPQKSDNGEVECSMPQLWCGDSEGDQGQLSSI.

The region spanning 8–78 (VSFKDVTVDF…DGEIPSQSRP (71 aa)) is the KRAB domain. Lysine 156 is covalently cross-linked (Glycyl lysine isopeptide (Lys-Gly) (interchain with G-Cter in SUMO2)). A C2H2-type 1; degenerate zinc finger spans residues 223–245 (CECNQCGKPLHHKQALIQQQKIH). The C2H2-type 2; degenerate zinc-finger motif lies at 279–301 (HECHECEAVFTQKSQLDGSQRVY). The segment at 328-350 (YKCSDYGRAFIQKSDLFRCQRIH) adopts a C2H2-type 3; degenerate zinc-finger fold. A C2H2-type 4; degenerate zinc finger spans residues 356–378 (YEYSECEKNLPQNSNLNIHKKIH). 15 consecutive C2H2-type zinc fingers follow at residues 384–406 (FECT…QKIH), 412–434 (YVCT…ERIH), 440–462 (YECS…QRIH), 468–490 (FICS…QKIH), 496–518 (YICT…QKIH), 524–546 (YKCS…QKCH), 552–574 (YECS…QRIH), 580–602 (YVCT…ERIH), 608–630 (YECS…QQIH), 636–658 (YRCA…QKIH), 664–686 (YKCS…QQSH), 692–714 (YECS…QRIH), 720–742 (YICN…RRIH), 748–770 (YECS…HRIH), and 776–798 (YICA…QKIH). Lysine 816 is covalently cross-linked (Glycyl lysine isopeptide (Lys-Gly) (interchain with G-Cter in SUMO2)).

It belongs to the krueppel C2H2-type zinc-finger protein family.

It localises to the nucleus. May be involved in transcriptional regulation. This Homo sapiens (Human) protein is Zinc finger protein 484 (ZNF484).